The following is a 200-amino-acid chain: Probable DNA-directed RNA polymerase subunit delta (200 aa).

An HTH HARE-type domain is found at L19–W88. Acidic residues-rich tracts occupy residues D125–E143 and Y150–E200. The interval D125–E200 is disordered.

The protein belongs to the RpoE family. In terms of assembly, RNAP is composed of a core of 2 alpha, a beta and a beta' subunits. The core is associated with a delta subunit and one of several sigma factors.

Participates in both the initiation and recycling phases of transcription. In the presence of the delta subunit, RNAP displays an increased specificity of transcription, a decreased affinity for nucleic acids, and an increased efficiency of RNA synthesis because of enhanced recycling. This is Probable DNA-directed RNA polymerase subunit delta from Streptococcus pneumoniae serotype 4 (strain ATCC BAA-334 / TIGR4).